We begin with the raw amino-acid sequence, 887 residues long: Alanine--tRNA ligase (887 aa).

Zn(2+) is bound by residues H564, H568, C676, and H680.

The protein belongs to the class-II aminoacyl-tRNA synthetase family. The cofactor is Zn(2+).

The protein localises to the cytoplasm. It carries out the reaction tRNA(Ala) + L-alanine + ATP = L-alanyl-tRNA(Ala) + AMP + diphosphate. In terms of biological role, catalyzes the attachment of alanine to tRNA(Ala) in a two-step reaction: alanine is first activated by ATP to form Ala-AMP and then transferred to the acceptor end of tRNA(Ala). Also edits incorrectly charged Ser-tRNA(Ala) and Gly-tRNA(Ala) via its editing domain. In Agrobacterium fabrum (strain C58 / ATCC 33970) (Agrobacterium tumefaciens (strain C58)), this protein is Alanine--tRNA ligase.